Here is a 466-residue protein sequence, read N- to C-terminus: UDP-N-acetylmuramate--L-alanine ligase (466 aa).

114 to 120 (GTHGKTT) contributes to the ATP binding site.

The protein belongs to the MurCDEF family.

It localises to the cytoplasm. The enzyme catalyses UDP-N-acetyl-alpha-D-muramate + L-alanine + ATP = UDP-N-acetyl-alpha-D-muramoyl-L-alanine + ADP + phosphate + H(+). It participates in cell wall biogenesis; peptidoglycan biosynthesis. Its function is as follows. Cell wall formation. The chain is UDP-N-acetylmuramate--L-alanine ligase from Chlorobium phaeobacteroides (strain DSM 266 / SMG 266 / 2430).